Here is a 579-residue protein sequence, read N- to C-terminus: Type IV pilus assembly ATPase PilB (579 aa).

340–345 (GSGKTV) contacts ATP. 4 residues coordinate Zn(2+): cysteine 470, cysteine 473, cysteine 507, and cysteine 510.

Belongs to the GSP E family. In terms of assembly, interacts with CpiA.

It is found in the cytoplasm. With respect to regulation, inhibited by the inhibitory protein CpiA. In terms of biological role, ATPase component of the type IV pilus (T4P). Acts as a molecular motor to provide the energy that is required for biogenesis of the pilus and the extrusion of substrates generated in the cytoplasm. PilB is required for optimal T4P extension and, consequently, efficient natural transformation. May promote processive T4P extension. In Acinetobacter baylyi (strain ATCC 33305 / BD413 / ADP1), this protein is Type IV pilus assembly ATPase PilB.